A 146-amino-acid chain; its full sequence is Metallothiol transferase FosB (146 aa).

The region spanning glycine 4–glycine 120 is the VOC domain. Mg(2+) is bound by residues histidine 7, histidine 66, and glutamate 116. The active-site Proton donor/acceptor is the glutamate 116.

Belongs to the fosfomycin resistance protein family. FosB subfamily. As to quaternary structure, homodimer. Requires Mg(2+) as cofactor.

It is found in the cytoplasm. Metallothiol transferase which confers resistance to fosfomycin by catalyzing the addition of a thiol cofactor to fosfomycin. L-cysteine is probably the physiological thiol donor. The sequence is that of Metallothiol transferase FosB from Shouchella clausii (strain KSM-K16) (Alkalihalobacillus clausii).